The following is a 668-amino-acid chain: Threonine--tRNA ligase (668 aa).

Residues Met1–Arg64 enclose the TGS domain. Residues Asp245 to Pro553 form a catalytic region. Zn(2+) contacts are provided by Cys347, His398, and His530.

The protein belongs to the class-II aminoacyl-tRNA synthetase family. As to quaternary structure, homodimer. Zn(2+) is required as a cofactor.

It localises to the cytoplasm. The enzyme catalyses tRNA(Thr) + L-threonine + ATP = L-threonyl-tRNA(Thr) + AMP + diphosphate + H(+). In terms of biological role, catalyzes the attachment of threonine to tRNA(Thr) in a two-step reaction: L-threonine is first activated by ATP to form Thr-AMP and then transferred to the acceptor end of tRNA(Thr). Also edits incorrectly charged L-seryl-tRNA(Thr). This Rhizobium leguminosarum bv. trifolii (strain WSM2304) protein is Threonine--tRNA ligase.